Consider the following 200-residue polypeptide: Putative AgrB-like protein (200 aa).

Helical transmembrane passes span 49-69 (LIITIILALLLHELVPVLVFM), 88-108 (LLCTILTAVTFVGVPYLIQFT), 114-134 (LFRFILCLLLTVPIGMFSPAV), 148-168 (ALKHKAIITSLVFSFLQFLVS), and 171-191 (LGTIIVVSLLLVFTLIVPLKG).

The protein belongs to the AgrB family.

Its subcellular location is the cell membrane. Its function is as follows. May be involved in the proteolytic processing of a quorum sensing system signal molecule precursor. The sequence is that of Putative AgrB-like protein from Lactiplantibacillus plantarum (strain ATCC BAA-793 / NCIMB 8826 / WCFS1) (Lactobacillus plantarum).